We begin with the raw amino-acid sequence, 258 residues long: tRNA pseudouridine synthase A (258 aa).

Residue aspartate 52 is the Nucleophile of the active site. Tyrosine 111 is a binding site for substrate.

Belongs to the tRNA pseudouridine synthase TruA family. As to quaternary structure, homodimer.

It carries out the reaction uridine(38/39/40) in tRNA = pseudouridine(38/39/40) in tRNA. Its function is as follows. Formation of pseudouridine at positions 38, 39 and 40 in the anticodon stem and loop of transfer RNAs. The sequence is that of tRNA pseudouridine synthase A from Azorhizobium caulinodans (strain ATCC 43989 / DSM 5975 / JCM 20966 / LMG 6465 / NBRC 14845 / NCIMB 13405 / ORS 571).